A 507-amino-acid polypeptide reads, in one-letter code: uncharacterized protein (507 aa).

The next 12 helical transmembrane spans lie at 11 to 31, 97 to 117, 125 to 145, 149 to 169, 187 to 207, 209 to 229, 283 to 303, 326 to 346, 354 to 374, 388 to 408, 423 to 443, and 452 to 472; these read ILCFFLWQFGLFYACQLIFPI, AWIATIQFIGALVGALVYGHL, PVSFVGISIGIIFGVASGFAP, VFAVLLFICGTSVACIMIVFY, FFNWGYARLVFTLVCFICGYW, SAAIATSLLALPILPVLLWLP, LFSSWPIAYSTIVVGSLWFST, FVQAAAIALSKLSIFLLDLFI, LHQVPQIIMIACYTTIMALMI, LAIIIINIIGTSFIELTWDAC, IGIGTCSLLARIGALLAPQMA, and IPYIIVCSIGIISLLISCFFL.

Belongs to the major facilitator superfamily.

The protein resides in the membrane. This is an uncharacterized protein from Caenorhabditis elegans.